A 249-amino-acid chain; its full sequence is Histone H1 (249 aa).

Low complexity-rich tracts occupy residues 1–19 (MSDS…QTAS) and 27–43 (KKPA…TTAP). Disordered stretches follow at residues 1-53 (MSDS…QQMV) and 105-249 (QTKG…ATKK). The H15 domain maps to 45-119 (THPPTQQMVD…GASGSFKLSA (75 aa)). Residues 121-134 (SKKEPKPKVSSVEK) are compositionally biased toward basic and acidic residues. The segment covering 146-158 (AKKKTISATKKPK) has biased composition (basic residues). A compositionally biased stretch (basic and acidic residues) spans 173 to 190 (KSVDKKKAEKAKAKDAKK). Over residues 195–233 (KAKPTTAKAKSSAAKPKTPKPKTTSAKPKKVVAAASPKK) the composition is skewed to low complexity. Over residues 234–249 (AAAKKPKAKTASATKK) the composition is skewed to basic residues.

The protein belongs to the histone H1/H5 family.

It is found in the nucleus. The protein localises to the chromosome. In terms of biological role, histones H1 are necessary for the condensation of nucleosome chains into higher-order structures. This Drosophila hydei (Fruit fly) protein is Histone H1 (His1).